The sequence spans 653 residues: Aspartate--tRNA ligase, mitochondrial (653 aa).

Residues 1 to 46 (MYLGFWLSRLCRGLSRPIGKTMRPIWGSLSRNLALSSQRIPEFSSF) constitute a mitochondrion transit peptide. A Phosphothreonine modification is found at Thr218. Ser241 carries the phosphoserine modification. The segment at 243–246 (QQFK) is aspartate. Residue Arg265 coordinates L-aspartate. ATP contacts are provided by residues 265 to 267 (RDE) and Glu534. Position 541 (Arg541) interacts with L-aspartate. 583-586 (GLDR) contributes to the ATP binding site.

The protein belongs to the class-II aminoacyl-tRNA synthetase family. Type 1 subfamily. Homodimer.

The protein resides in the mitochondrion matrix. The protein localises to the mitochondrion membrane. The enzyme catalyses tRNA(Asp) + L-aspartate + ATP = L-aspartyl-tRNA(Asp) + AMP + diphosphate. Functionally, catalyzes the attachment of aspartate to tRNA(Asp) in a two-step reaction: aspartate is first activated by ATP to form Asp-AMP and then transferred to the acceptor end of tRNA(Asp). The sequence is that of Aspartate--tRNA ligase, mitochondrial (Dars2) from Mus musculus (Mouse).